The following is a 489-amino-acid chain: Protein MGF 505-2R (489 aa).

It belongs to the asfivirus MGF 505 family.

Plays a role in virus cell tropism, and may be required for efficient virus replication in macrophages. The polypeptide is Protein MGF 505-2R (Ornithodoros (relapsing fever ticks)).